Consider the following 287-residue polypeptide: Bifunctional protein FolD (287 aa).

NADP(+) contacts are provided by residues 166 to 168 (GAS) and isoleucine 232.

Belongs to the tetrahydrofolate dehydrogenase/cyclohydrolase family. Homodimer.

The catalysed reaction is (6R)-5,10-methylene-5,6,7,8-tetrahydrofolate + NADP(+) = (6R)-5,10-methenyltetrahydrofolate + NADPH. It carries out the reaction (6R)-5,10-methenyltetrahydrofolate + H2O = (6R)-10-formyltetrahydrofolate + H(+). It functions in the pathway one-carbon metabolism; tetrahydrofolate interconversion. Functionally, catalyzes the oxidation of 5,10-methylenetetrahydrofolate to 5,10-methenyltetrahydrofolate and then the hydrolysis of 5,10-methenyltetrahydrofolate to 10-formyltetrahydrofolate. This is Bifunctional protein FolD from Pectobacterium carotovorum subsp. carotovorum (strain PC1).